A 355-amino-acid polypeptide reads, in one-letter code: Uroporphyrinogen decarboxylase (355 aa).

Residues 27-31 (RQAGR), aspartate 78, tyrosine 155, serine 210, and histidine 328 each bind substrate.

This sequence belongs to the uroporphyrinogen decarboxylase family. In terms of assembly, homodimer.

It localises to the cytoplasm. The enzyme catalyses uroporphyrinogen III + 4 H(+) = coproporphyrinogen III + 4 CO2. It functions in the pathway porphyrin-containing compound metabolism; protoporphyrin-IX biosynthesis; coproporphyrinogen-III from 5-aminolevulinate: step 4/4. Functionally, catalyzes the decarboxylation of four acetate groups of uroporphyrinogen-III to yield coproporphyrinogen-III. The chain is Uroporphyrinogen decarboxylase from Pseudomonas aeruginosa (strain UCBPP-PA14).